The sequence spans 39 residues: Cytochrome b559 subunit beta (39 aa).

The chain crosses the membrane as a helical span at residues 14–30 (WLTVHGLAVPTVSFLGS). H18 is a heme binding site.

The protein belongs to the PsbE/PsbF family. Heterodimer of an alpha subunit and a beta subunit. PSII is composed of 1 copy each of membrane proteins PsbA, PsbB, PsbC, PsbD, PsbE, PsbF, PsbH, PsbI, PsbJ, PsbK, PsbL, PsbM, PsbT, PsbX, PsbY, PsbZ, Psb30/Ycf12, at least 3 peripheral proteins of the oxygen-evolving complex and a large number of cofactors. It forms dimeric complexes. It depends on heme b as a cofactor.

It is found in the plastid. The protein localises to the chloroplast thylakoid membrane. Its function is as follows. This b-type cytochrome is tightly associated with the reaction center of photosystem II (PSII). PSII is a light-driven water:plastoquinone oxidoreductase that uses light energy to abstract electrons from H(2)O, generating O(2) and a proton gradient subsequently used for ATP formation. It consists of a core antenna complex that captures photons, and an electron transfer chain that converts photonic excitation into a charge separation. This is Cytochrome b559 subunit beta from Cucumis sativus (Cucumber).